The chain runs to 395 residues: Guanine nucleotide-binding protein subunit beta-5 (395 aa).

WD repeat units lie at residues 103–142, 145–184, 193–234, 236–278, 279–318, 320–362, and 365–394; these read GHGN…KEHA, MPCT…NENM, MHTN…QSFH, HGAD…QAFE, THES…EVAI, SKES…RVSI, and GHEN…LRVW.

It belongs to the WD repeat G protein beta family. Component of a complex composed of RGS9 (isoform RGS9-1), GNB5 and RGS9BP; within this complex, the presence of GNB5 stabilizes both itself and RGS9 and increases RGS9 GTPase-activating protein (GAP) activity. Interacts with RGS7, forming the RGS7-GNB5 complex; within this complex, the presence of GNB5 increases RGS7 GTPase-activating protein (GAP) activity. Interacts with GPR158; promotes the GTPase activator activity of the RGS7-GNB5 complex in absence of glycine, in contrast GTPase activator activity of the RGS7-GNB5 complex is inhibited in presence of glycine. Interacts with RGS6. Isoform 1 is only detected in retina. Isoform 2 is detected in brain (at protein level). Isoform 2 is detected in brain.

Its subcellular location is the membrane. Functionally, enhances GTPase-activating protein (GAP) activity of regulator of G protein signaling (RGS) proteins, such as RGS7 and RGS9, hence involved in the termination of the signaling initiated by the G protein coupled receptors (GPCRs) by accelerating the GTP hydrolysis on the G-alpha subunits, thereby promoting their inactivation. Increases RGS7 GTPase-activating protein (GAP) activity, thereby regulating mood and cognition. Increases RGS9 GTPase-activating protein (GAP) activity, hence contributes to the deactivation of G protein signaling initiated by D(2) dopamine receptors. May play an important role in neuronal signaling, including in the parasympathetic, but not sympathetic, control of heart rate. This Mus musculus (Mouse) protein is Guanine nucleotide-binding protein subunit beta-5 (Gnb5).